Here is a 2512-residue protein sequence, read N- to C-terminus: RNA replication protein (2512 aa).

The 212-residue stretch at 156–367 (RLTFSKNVAH…RLDVYLDKFL (212 aa)) folds into the Alphavirus-like MT domain. In terms of domain architecture, OTU spans 683–803 (LTVIQVPGDG…HSHYSLLVPC (121 aa)). A (+)RNA virus helicase ATP-binding domain is found at 1520 to 1696 (AIYTSLVAHN…DFVNTEARPL (177 aa)). In terms of domain architecture, (+)RNA virus helicase C-terminal spans 1697-1874 (ARTFRSPPDV…HLSLSGGGTT (178 aa)). In terms of domain architecture, RdRp catalytic spans 2265–2378 (FDSLEIDIKK…VGEKRDLQCD (114 aa)).

The enzyme catalyses ATP + H2O = ADP + phosphate + H(+). It catalyses the reaction RNA(n) + a ribonucleoside 5'-triphosphate = RNA(n+1) + diphosphate. In terms of biological role, RNA replication. The central part of this protein possibly functions as an ATP-binding helicase (Potential). The polypeptide is RNA replication protein (Citrus leprosis virus C (isolate Citrus sinesis/Brazil/Cordeiropolis/2003) (CiLV-C)).